The sequence spans 467 residues: Ribulose bisphosphate carboxylase large chain (467 aa).

Residues 1–2 (MS) constitute a propeptide that is removed on maturation. Pro-3 is subject to N-acetylproline. Lys-14 is subject to N6,N6,N6-trimethyllysine. Asn-123 and Thr-173 together coordinate substrate. The active-site Proton acceptor is Lys-175. A substrate-binding site is contributed by Lys-177. Residues Lys-201, Asp-203, and Glu-204 each coordinate Mg(2+). An N6-carboxylysine modification is found at Lys-201. The active-site Proton acceptor is the His-294. Arg-295, His-327, and Ser-379 together coordinate substrate.

It belongs to the RuBisCO large chain family. Type I subfamily. As to quaternary structure, heterohexadecamer of 8 large chains and 8 small chains; disulfide-linked. The disulfide link is formed within the large subunit homodimers. The cofactor is Mg(2+). Post-translationally, the disulfide bond which can form in the large chain dimeric partners within the hexadecamer appears to be associated with oxidative stress and protein turnover.

Its subcellular location is the plastid. It localises to the chloroplast. It carries out the reaction 2 (2R)-3-phosphoglycerate + 2 H(+) = D-ribulose 1,5-bisphosphate + CO2 + H2O. It catalyses the reaction D-ribulose 1,5-bisphosphate + O2 = 2-phosphoglycolate + (2R)-3-phosphoglycerate + 2 H(+). Functionally, ruBisCO catalyzes two reactions: the carboxylation of D-ribulose 1,5-bisphosphate, the primary event in carbon dioxide fixation, as well as the oxidative fragmentation of the pentose substrate in the photorespiration process. Both reactions occur simultaneously and in competition at the same active site. In Serenoa repens (Saw palmetto), this protein is Ribulose bisphosphate carboxylase large chain.